A 325-amino-acid polypeptide reads, in one-letter code: MTRYLARRLLNYLVLLALASFLTYCLTSLAFSPLESLMQRSPRPPQAVIDAKAHDLGLDRPILARYANWVSHAVRGDFGTTITGQPVGTELGRRIGVSLRLLVVGSVFGTVAGVVIGAWGAIRQYRLSDRVMTTLALLVLSTPTFVVANLLILGALRVNWAVGIQLFDYTGETSPGVAGGVWDRLGDRLQHLILPSLTLALAAAAGFSRYQRNAMLDVLGQDFIRTARAKGLTRRRALLKHGLRTALIPMATLFAYGVAGLVTGAVFVEKIFGWHGMGEWMVRGISTQDTNIVAAITVFSGAVVLLAGLLSDVIYAALDPRVRVS.

6 consecutive transmembrane segments (helical) span residues 12–32 (YLVL…LAFS), 102–122 (LVVG…WGAI), 135–155 (LALL…ILGA), 189–208 (LQHL…AGFS), 248–268 (IPMA…AVFV), and 290–310 (TNIV…AGLL). In terms of domain architecture, ABC transmembrane type-1 spans 95–311 (IGVSLRLLVV…AVVLLAGLLS (217 aa)).

The protein belongs to the binding-protein-dependent transport system permease family. OppBC subfamily. The complex is composed of an ATP-binding protein (OppD), two transmembrane proteins (OppB and OppC) and a solute-binding protein (OppA).

It localises to the cell inner membrane. In terms of biological role, part of the ABC transporter complex OppABCD involved in the uptake of oligopeptides. Responsible for the translocation of the substrate across the membrane. This is Oligopeptide transport system permease protein OppB from Mycobacterium bovis (strain ATCC BAA-935 / AF2122/97).